The following is a 72-amino-acid chain: Long neurotoxin OH-17 (72 aa).

5 disulfides stabilise this stretch: C3–C21, C14–C42, C27–C31, C46–C57, and C58–C63.

It belongs to the three-finger toxin family. Long-chain subfamily. Type II alpha-neurotoxin sub-subfamily. In terms of tissue distribution, expressed by the venom gland.

Its subcellular location is the secreted. In terms of biological role, binds with high affinity to muscular (alpha-1/CHRNA1) and neuronal (alpha-7/CHRNA7) nicotinic acetylcholine receptor (nAChR) and inhibits acetylcholine from binding to the receptor, thereby impairing neuromuscular and neuronal transmission. The sequence is that of Long neurotoxin OH-17 from Ophiophagus hannah (King cobra).